A 133-amino-acid chain; its full sequence is Meiotically up-regulated gene 15 protein (133 aa).

The protein resides in the cytoplasm. It is found in the nucleus. In terms of biological role, has a role in meiosis. This is Meiotically up-regulated gene 15 protein (mug15) from Schizosaccharomyces pombe (strain 972 / ATCC 24843) (Fission yeast).